Reading from the N-terminus, the 547-residue chain is CTP synthase (547 aa).

An amidoligase domain region spans residues M1–I265. S13 serves as a coordination point for CTP. S13 serves as a coordination point for UTP. ATP contacts are provided by residues S14–L19 and D71. The Mg(2+) site is built by D71 and E139. CTP-binding positions include D146–E148, K186–Q191, and K222. Residues K186–Q191 and K222 each bind UTP. Residues K291–L546 form the Glutamine amidotransferase type-1 domain. G353 serves as a coordination point for L-glutamine. Catalysis depends on C380, which acts as the Nucleophile; for glutamine hydrolysis. L-glutamine is bound by residues L381 to Q384, E404, and R474. Catalysis depends on residues H519 and E521.

It belongs to the CTP synthase family. Homotetramer.

It carries out the reaction UTP + L-glutamine + ATP + H2O = CTP + L-glutamate + ADP + phosphate + 2 H(+). The enzyme catalyses L-glutamine + H2O = L-glutamate + NH4(+). The catalysed reaction is UTP + NH4(+) + ATP = CTP + ADP + phosphate + 2 H(+). It functions in the pathway pyrimidine metabolism; CTP biosynthesis via de novo pathway; CTP from UDP: step 2/2. Allosterically activated by GTP, when glutamine is the substrate; GTP has no effect on the reaction when ammonia is the substrate. The allosteric effector GTP functions by stabilizing the protein conformation that binds the tetrahedral intermediate(s) formed during glutamine hydrolysis. Inhibited by the product CTP, via allosteric rather than competitive inhibition. Functionally, catalyzes the ATP-dependent amination of UTP to CTP with either L-glutamine or ammonia as the source of nitrogen. Regulates intracellular CTP levels through interactions with the four ribonucleotide triphosphates. In Jannaschia sp. (strain CCS1), this protein is CTP synthase.